Here is a 30-residue protein sequence, read N- to C-terminus: Protein Tat (30 aa).

Residues 1–30 (PLPTTRGNPTGPKESKKEVESKTETDPFAW) form a disordered region. Positions 6–8 (RGN) match the Cell attachment site motif. Residues 13 to 30 (KESKKEVESKTETDPFAW) show a composition bias toward basic and acidic residues.

The protein belongs to the lentiviruses Tat family. In terms of assembly, interacts with host CCNT1. Associates with the P-TEFb complex composed at least of Tat, P-TEFb (CDK9 and CCNT1), TAR RNA, RNA Pol II. Recruits the HATs CREBBP, TAF1/TFIID, EP300, PCAF and GCN5L2. Interacts with host KAT5/Tip60; this interaction targets the latter to degradation. Interacts with the host deacetylase SIRT1. Interacts with host capping enzyme RNGTT; this interaction stimulates RNGTT. Binds to host KDR, and to the host integrins ITGAV/ITGB3 and ITGA5/ITGB1. Interacts with host KPNB1/importin beta-1 without previous binding to KPNA1/importin alpha-1. Interacts with EIF2AK2. Interacts with host nucleosome assembly protein NAP1L1; this interaction may be required for the transport of Tat within the nucleus, since the two proteins interact at the nuclear rim. Interacts with host C1QBP/SF2P32; this interaction involves lysine-acetylated Tat. Interacts with the host chemokine receptors CCR2, CCR3 and CXCR4. Interacts with host DPP4/CD26; this interaction may trigger an anti-proliferative effect. Interacts with host LDLR. Interacts with the host extracellular matrix metalloproteinase MMP1. Interacts with host PRMT6; this interaction mediates Tat's methylation. Interacts with, and is ubiquitinated by MDM2/Hdm2. Interacts with host PSMC3 and HTATIP2. Interacts with STAB1; this interaction may overcome SATB1-mediated repression of IL2 and IL2RA (interleukin) in T cells by binding to the same domain than HDAC1. Interacts (when acetylated on Lys-50 and Lys-51) with human CDK13, thereby increasing HIV-1 mRNA splicing and promoting the production of the doubly spliced HIV-1 protein Nef. In terms of processing, acetylation by EP300, CREBBP, GCN5L2/GCN5 and PCAF regulates the transactivation activity of Tat. EP300-mediated acetylation of Lys-50 promotes dissociation of Tat from the TAR RNA through the competitive binding to PCAF's bromodomain. In addition, the non-acetylated Tat's N-terminus can also interact with PCAF. PCAF-mediated acetylation of Lys-28 enhances Tat's binding to CCNT1. Lys-50 is deacetylated by SIRT1. Post-translationally, phosphorylated by EIF2AK2 on serine and threonine residues adjacent to the basic region important for TAR RNA binding and function. Phosphorylation of Tat by EIF2AK2 is dependent on the prior activation of EIF2AK2 by dsRNA. Asymmetrical arginine methylation by host PRMT6 seems to diminish the transactivation capacity of Tat and affects the interaction with host CCNT1. In terms of processing, polyubiquitination by MDM2 does not target Tat to degradation, but activates its transactivation function and fosters interaction with CCNT1 and TAR RNA.

The protein localises to the host nucleus. It localises to the host nucleolus. It is found in the host cytoplasm. The protein resides in the secreted. In terms of biological role, transcriptional activator that increases RNA Pol II processivity, thereby increasing the level of full-length viral transcripts. Recognizes a hairpin structure at the 5'-LTR of the nascent viral mRNAs referred to as the transactivation responsive RNA element (TAR) and recruits the cyclin T1-CDK9 complex (P-TEFb complex) that will in turn hyperphosphorylate the RNA polymerase II to allow efficient elongation. The CDK9 component of P-TEFb and other Tat-activated kinases hyperphosphorylate the C-terminus of RNA Pol II that becomes stabilized and much more processive. Other factors such as HTATSF1/Tat-SF1, SUPT5H/SPT5, and HTATIP2 are also important for Tat's function. Besides its effect on RNA Pol II processivity, Tat induces chromatin remodeling of proviral genes by recruiting the histone acetyltransferases (HATs) CREBBP, EP300 and PCAF to the chromatin. This also contributes to the increase in proviral transcription rate, especially when the provirus integrates in transcriptionally silent region of the host genome. To ensure maximal activation of the LTR, Tat mediates nuclear translocation of NF-kappa-B by interacting with host RELA. Through its interaction with host TBP, Tat may also modulate transcription initiation. Tat can reactivate a latently infected cell by penetrating in it and transactivating its LTR promoter. In the cytoplasm, Tat is thought to act as a translational activator of HIV-1 mRNAs. Functionally, extracellular circulating Tat can be endocytosed by surrounding uninfected cells via the binding to several surface receptors such as CD26, CXCR4, heparan sulfate proteoglycans (HSPG) or LDLR. Neurons are rarely infected, but they internalize Tat via their LDLR. Endosomal low pH allows Tat to cross the endosome membrane to enter the cytosol and eventually further translocate into the nucleus, thereby inducing severe cell dysfunctions ranging from cell activation to cell death. Through its interaction with nuclear HATs, Tat is potentially able to control the acetylation-dependent cellular gene expression. Tat seems to inhibit the HAT activity of KAT5/Tip60 and TAF1, and consequently modify the expression of specific cellular genes. Modulates the expression of many cellular genes involved in cell survival, proliferation or in coding for cytokines (such as IL10) or cytokine receptors. May be involved in the derepression of host interleukin IL2 expression. Mediates the activation of cyclin-dependent kinases and dysregulation of microtubule network. Tat plays a role in T-cell and neurons apoptosis. Tat induced neurotoxicity and apoptosis probably contribute to neuroAIDS. Host extracellular matrix metalloproteinase MMP1 cleaves Tat and decreases Tat's mediated neurotoxicity. Circulating Tat also acts as a chemokine-like and/or growth factor-like molecule that binds to specific receptors on the surface of the cells, affecting many cellular pathways. In the vascular system, Tat binds to ITGAV/ITGB3 and ITGA5/ITGB1 integrins dimers at the surface of endothelial cells and competes with bFGF for heparin-binding sites, leading to an excess of soluble bFGF. Binds to KDR/VEGFR-2. All these Tat-mediated effects enhance angiogenesis in Kaposi's sarcoma lesions. The sequence is that of Protein Tat from Human immunodeficiency virus type 1 group M subtype A (isolate Z321) (HIV-1).